The chain runs to 225 residues: NAD(P)H-quinone oxidoreductase subunit K, chloroplastic (225 aa).

[4Fe-4S] cluster-binding residues include Cys-43, Cys-44, Cys-108, and Cys-139.

Belongs to the complex I 20 kDa subunit family. NDH is composed of at least 16 different subunits, 5 of which are encoded in the nucleus. Requires [4Fe-4S] cluster as cofactor.

It is found in the plastid. It localises to the chloroplast thylakoid membrane. It catalyses the reaction a plastoquinone + NADH + (n+1) H(+)(in) = a plastoquinol + NAD(+) + n H(+)(out). It carries out the reaction a plastoquinone + NADPH + (n+1) H(+)(in) = a plastoquinol + NADP(+) + n H(+)(out). Functionally, NDH shuttles electrons from NAD(P)H:plastoquinone, via FMN and iron-sulfur (Fe-S) centers, to quinones in the photosynthetic chain and possibly in a chloroplast respiratory chain. The immediate electron acceptor for the enzyme in this species is believed to be plastoquinone. Couples the redox reaction to proton translocation, and thus conserves the redox energy in a proton gradient. The protein is NAD(P)H-quinone oxidoreductase subunit K, chloroplastic of Triticum aestivum (Wheat).